A 383-amino-acid chain; its full sequence is Pheromone-regulated membrane protein 10 (383 aa).

The Cytoplasmic portion of the chain corresponds to 1 to 65 (MIVSFGDATT…ILADTNLYPP (65 aa)). The helical transmembrane segment at 66-86 (WMCVLLYAFCSAMVTPYAFGG) threads the bilayer. A topological domain (extracellular) is located at residue Asp87. The chain crosses the membrane as a helical span at residues 88-108 (WVNLAISFFMGLCVGSLQFIL). Over 109–117 (SQKSYMYSN) the chain is Cytoplasmic. Residues 118 to 138 (VFEISASIVVSFCGRAFGSIP) traverse the membrane as a helical segment. At 139–141 (RSH) the chain is on the extracellular side. The chain crosses the membrane as a helical span at residues 142 to 162 (ICFGAVTQGSLALILPGYIIL). Residues 163–180 (CGALELQSRSLVAGAVRM) lie on the Cytoplasmic side of the membrane. The chain crosses the membrane as a helical span at residues 181 to 201 (FYAIIYSLFLGFGITLGSALF). Residues 202-216 (GWMYHNATNEISCPQ) lie on the Extracellular side of the membrane. A helical membrane pass occupies residues 217 to 237 (LISPWFRFLFVPAFTISISLL). At 238 to 241 (NQAH) the chain is on the cytoplasmic side. Residues 242-262 (ISQLPVMVFISCTGYVVTYWA) form a helical membrane-spanning segment. Residues 263-271 (GKHFANSTE) lie on the Extracellular side of the membrane. Residues 272–292 (FTAALAAFVIGVLGNLYSRIW) traverse the membrane as a helical segment. Position 293 (Lys293) is a topological domain, cytoplasmic. Residues 294-314 (GLAVSAMLPAIFVQVPSGIAS) form a helical membrane-spanning segment. Residues 315-352 (QNSLLSGLQSANTIVNANETITTSTSDPSSSMSFGMTM) lie on the Extracellular side of the membrane. Residues 353–373 (IQVCVGISVGLFASSLFVYPF) form a helical membrane-spanning segment. Over 374 to 383 (GKKKTGLFSL) the chain is Cytoplasmic.

The protein belongs to the ThrE exporter (TC 2.A.79) family.

It localises to the membrane. The sequence is that of Pheromone-regulated membrane protein 10 (PRM10) from Saccharomyces cerevisiae (strain ATCC 204508 / S288c) (Baker's yeast).